Here is a 63-residue protein sequence, read N- to C-terminus: Large ribosomal subunit protein bL35 (63 aa).

The protein belongs to the bacterial ribosomal protein bL35 family.

The sequence is that of Large ribosomal subunit protein bL35 from Sulfurovum sp. (strain NBC37-1).